The sequence spans 93 residues: Small ribosomal subunit protein bS20 (93 aa).

It belongs to the bacterial ribosomal protein bS20 family.

Binds directly to 16S ribosomal RNA. This is Small ribosomal subunit protein bS20 from Dictyoglomus thermophilum (strain ATCC 35947 / DSM 3960 / H-6-12).